The following is a 409-amino-acid chain: Autotransproter heptosyltransferase BAHTCr (409 aa).

ADP-D-glycero-beta-D-manno-heptose-binding residues include Thr-107, Leu-108, and Gly-109. Asp-110 acts as the Proton acceptor in catalysis. Residues Gln-224, Thr-226, Lys-230, Arg-257, Gly-302, and Glu-326 each coordinate ADP-D-glycero-beta-D-manno-heptose. Residues Cys-339, Cys-342, Cys-358, and Cys-370 each contribute to the Fe(3+) site.

Belongs to the glycosyltransferase 9 family. As to quaternary structure, homododecamer composed of 6 homodimers forming a ring. It depends on Fe(3+) as a cofactor.

It localises to the cytoplasm. It catalyses the reaction ADP-D-glycero-beta-D-manno-heptose + L-seryl-[protein] = O-(D-glycero-alpha-D-manno-heptosyl)-L-seryl-[protein] + ADP + H(+). It carries out the reaction ADP-L-glycero-beta-D-manno-heptose + L-seryl-[protein] = O-(L-glycero-alpha-D-manno-heptosyl)-L-seryl-[protein] + ADP + H(+). In terms of biological role, glycosylates autotransporter CARC. By glycosylating CARC, involved in the colonization of the mouse host gastrointestinal tract. The sequence is that of Autotransproter heptosyltransferase BAHTCr from Citrobacter rodentium (strain ICC168) (Citrobacter freundii biotype 4280).